A 529-amino-acid chain; its full sequence is Chaperonin GroEL, chloroplastic (529 aa).

Residues 29 to 32, 86 to 90, Gly414, 480 to 482, and Asp496 contribute to the ATP site; these read TLGP, DGTTT, and DAA.

It belongs to the chaperonin (HSP60) family. In terms of assembly, forms a cylinder of 14 subunits composed of two heptameric rings stacked back-to-back. Interacts with the co-chaperonin GroES.

It localises to the plastid. The protein resides in the chloroplast. It carries out the reaction ATP + H2O + a folded polypeptide = ADP + phosphate + an unfolded polypeptide.. In terms of biological role, together with its co-chaperonin GroES, plays an essential role in assisting protein folding. The GroEL-GroES system forms a nano-cage that allows encapsulation of the non-native substrate proteins and provides a physical environment optimized to promote and accelerate protein folding. This chain is Chaperonin GroEL, chloroplastic, found in Guillardia theta (Cryptophyte).